The following is a 651-amino-acid chain: Chaperone protein HtpG (651 aa).

The interval 1 to 353 (MAPHVEQLEF…AQDMSLNVSR (353 aa)) is a; substrate-binding. The interval 354–569 (EILQQDRQIR…TFGITPALAR (216 aa)) is b. Residues 570–651 (MYRASGQPVP…RLTRMVGEQS (82 aa)) form a c region.

Belongs to the heat shock protein 90 family. In terms of assembly, homodimer.

It localises to the cytoplasm. In terms of biological role, molecular chaperone. Has ATPase activity. This chain is Chaperone protein HtpG, found in Mycolicibacterium gilvum (strain PYR-GCK) (Mycobacterium gilvum (strain PYR-GCK)).